The chain runs to 389 residues: Dihydroorotase (389 aa).

Zn(2+)-binding residues include His51 and His53. Substrate contacts are provided by residues 53–55 (HVR) and Asn85. 4 residues coordinate Zn(2+): Lys133, His158, His192, and Asp254. N6-carboxylysine is present on Lys133. The active site involves Asp254. Substrate-binding positions include His258 and 272-273 (PG).

The protein belongs to the metallo-dependent hydrolases superfamily. DHOase family. Class I DHOase subfamily. The cofactor is Zn(2+).

The catalysed reaction is (S)-dihydroorotate + H2O = N-carbamoyl-L-aspartate + H(+). It functions in the pathway pyrimidine metabolism; UMP biosynthesis via de novo pathway; (S)-dihydroorotate from bicarbonate: step 3/3. Catalyzes the reversible cyclization of carbamoyl aspartate to dihydroorotate. The polypeptide is Dihydroorotase (Sulfurisphaera tokodaii (strain DSM 16993 / JCM 10545 / NBRC 100140 / 7) (Sulfolobus tokodaii)).